We begin with the raw amino-acid sequence, 190 residues long: Inner membrane-spanning protein YciB (190 aa).

The next 6 helical transmembrane spans lie at 3 to 23, 24 to 44, 49 to 69, 76 to 96, 121 to 141, and 149 to 169; these read FLFD…AGIY, VATT…WFKH, AMQW…LIFH, WKPT…VVVV, LVWA…AYNF, and FKLF…SVWL.

It belongs to the YciB family.

It localises to the cell inner membrane. Plays a role in cell envelope biogenesis, maintenance of cell envelope integrity and membrane homeostasis. This is Inner membrane-spanning protein YciB from Ralstonia pickettii (strain 12J).